The primary structure comprises 314 residues: Olfactory receptor 52K1 (314 aa).

The Extracellular segment spans residues 1–27 (MLPSNITSTHPAVFLLVGIPGLEHLHA). Asparagine 5 is a glycosylation site (N-linked (GlcNAc...) asparagine). Residues 28–48 (WISIPFCFAYTLALLGNCTLL) form a helical membrane-spanning segment. Residues 49–56 (FIIQADAA) are Cytoplasmic-facing. Residues 57-77 (LHEPMYLFLAMLATIDLVLSS) traverse the membrane as a helical segment. The Extracellular segment spans residues 78–101 (TTLPKMLAIFWFRDQEINFFACLV). Cysteine 99 and cysteine 191 form a disulfide bridge. The helical transmembrane segment at 102–122 (QMFFLHSFSIMESAVLLAMAF) threads the bilayer. The Cytoplasmic portion of the chain corresponds to 123–141 (DRYVAICKPLHYTTVLTGS). A helical membrane pass occupies residues 142 to 162 (LITKIGMAAVARAVTLMTPLP). Topologically, residues 163–198 (FLLRRFHYCRGPVIAHCYCEHMAVVRLACGDTSFNN) are extracellular. Residues 199–219 (IYGIAVAMFIVVLDLLFVILS) traverse the membrane as a helical segment. Topologically, residues 220-239 (YVFILQAVLQLASQEARYKA) are cytoplasmic. A helical transmembrane segment spans residues 240–260 (FGTCVSHIGAILSTYTPVVIS). Over 261-275 (SVMHRVARHAAPRVH) the chain is Extracellular. The helical transmembrane segment at 276–296 (ILLAIFYLLFPPMVNPIIYGV) threads the bilayer. Residues 297–314 (KTKQIREYVLSLFQRKNM) are Cytoplasmic-facing.

Belongs to the G-protein coupled receptor 1 family.

It localises to the cell membrane. Functionally, odorant receptor. This chain is Olfactory receptor 52K1 (OR52K1), found in Homo sapiens (Human).